Reading from the N-terminus, the 117-residue chain is Ribonuclease P protein component (117 aa).

This sequence belongs to the RnpA family. Consists of a catalytic RNA component (M1 or rnpB) and a protein subunit.

The enzyme catalyses Endonucleolytic cleavage of RNA, removing 5'-extranucleotides from tRNA precursor.. Its function is as follows. RNaseP catalyzes the removal of the 5'-leader sequence from pre-tRNA to produce the mature 5'-terminus. It can also cleave other RNA substrates such as 4.5S RNA. The protein component plays an auxiliary but essential role in vivo by binding to the 5'-leader sequence and broadening the substrate specificity of the ribozyme. The polypeptide is Ribonuclease P protein component (Staphylococcus aureus (strain MW2)).